Here is a 194-residue protein sequence, read N- to C-terminus: Holliday junction branch migration complex subunit RuvA (194 aa).

The segment at 1–64 (MISRLTGKLV…EDAHLLFGFA (64 aa)) is domain I. The interval 65–143 (TAEERKTFRQ…AHTVTDGLFA (79 aa)) is domain II. A flexible linker region spans residues 144–147 (AAPA). The domain III stretch occupies residues 147-194 (AADETEDIVSTLLALGYSEREAKAAVKGVPEGTDVGEGVRLALKNLLK).

It belongs to the RuvA family. As to quaternary structure, homotetramer. Forms an RuvA(8)-RuvB(12)-Holliday junction (HJ) complex. HJ DNA is sandwiched between 2 RuvA tetramers; dsDNA enters through RuvA and exits via RuvB. An RuvB hexamer assembles on each DNA strand where it exits the tetramer. Each RuvB hexamer is contacted by two RuvA subunits (via domain III) on 2 adjacent RuvB subunits; this complex drives branch migration. In the full resolvosome a probable DNA-RuvA(4)-RuvB(12)-RuvC(2) complex forms which resolves the HJ.

Its subcellular location is the cytoplasm. Its function is as follows. The RuvA-RuvB-RuvC complex processes Holliday junction (HJ) DNA during genetic recombination and DNA repair, while the RuvA-RuvB complex plays an important role in the rescue of blocked DNA replication forks via replication fork reversal (RFR). RuvA specifically binds to HJ cruciform DNA, conferring on it an open structure. The RuvB hexamer acts as an ATP-dependent pump, pulling dsDNA into and through the RuvAB complex. HJ branch migration allows RuvC to scan DNA until it finds its consensus sequence, where it cleaves and resolves the cruciform DNA. In Neisseria meningitidis serogroup B (strain ATCC BAA-335 / MC58), this protein is Holliday junction branch migration complex subunit RuvA.